The sequence spans 317 residues: uncharacterized protein (317 aa).

This is an uncharacterized protein from Schizosaccharomyces pombe (strain 972 / ATCC 24843) (Fission yeast).